We begin with the raw amino-acid sequence, 431 residues long: MSTQMSVFLSQEAAQPQWGARAILSFSEAGATIHIGEGHDLGAVQRAGRTLDGQGIALVALSGKGWDLESVWAFYQGYRGPKKKNALEWDALAEADQVELEARIRATDWTRDIINKTAEEVAPRQLATMAAEYIKSVAPAGTVKAKIVKDKDLLTEGWEGIYAVGRGSERTSAMLQLDFNPTGDENAPVFACLVGKGITFDSGGYSIKPGQFMTAMKADMGGAATITGGLGLAIERGLNKRIKLILCCAENMISGRALKLGDIITYKNGKTVEIMNTDAEGRLVLADGLMFASAQNPELIIDCATLTGAAKNALGNDYHALLSFDDELSHQALTAANQEKEGLWPLPLADFHRGMLPSNFADLSNISSGDYTPGASTAAAFLSYFVDDYKKGWIHMDCAGTYRKSSSDKWAAGATGMGVRTLARLLIDQAK.

Residues K196 and D201 each coordinate Mn(2+). Residue K208 is part of the active site. Mn(2+) contacts are provided by D219, D278, and E280. The active site involves R282.

The protein belongs to the peptidase M17 family. As to quaternary structure, homohexamer. Mn(2+) is required as a cofactor.

It is found in the cytoplasm. The catalysed reaction is Release of an N-terminal amino acid, Xaa, from a peptide or arylamide. Xaa is preferably Glu or Asp but may be other amino acids, including Leu, Met, His, Cys and Gln.. In terms of biological role, probably plays an important role in intracellular peptide degradation. The chain is Peptidase B from Vibrio atlanticus (strain LGP32) (Vibrio splendidus (strain Mel32)).